A 336-amino-acid polypeptide reads, in one-letter code: tRNA N6-adenosine threonylcarbamoyltransferase (336 aa).

Fe cation is bound by residues histidine 110 and histidine 114. Substrate is bound by residues 133 to 137 (LVSGK), aspartate 166, glycine 179, and asparagine 271. Aspartate 300 is a binding site for Fe cation.

Belongs to the KAE1 / TsaD family. Fe(2+) is required as a cofactor.

The protein resides in the cytoplasm. The enzyme catalyses L-threonylcarbamoyladenylate + adenosine(37) in tRNA = N(6)-L-threonylcarbamoyladenosine(37) in tRNA + AMP + H(+). Its function is as follows. Required for the formation of a threonylcarbamoyl group on adenosine at position 37 (t(6)A37) in tRNAs that read codons beginning with adenine. Is involved in the transfer of the threonylcarbamoyl moiety of threonylcarbamoyl-AMP (TC-AMP) to the N6 group of A37, together with TsaE and TsaB. TsaD likely plays a direct catalytic role in this reaction. This chain is tRNA N6-adenosine threonylcarbamoyltransferase, found in Buchnera aphidicola subsp. Acyrthosiphon pisum (strain 5A).